The primary structure comprises 401 residues: NAD(P)H-quinone oxidoreductase subunit H, chloroplastic (401 aa).

It belongs to the complex I 49 kDa subunit family. NDH is composed of at least 16 different subunits, 5 of which are encoded in the nucleus.

The protein localises to the plastid. It is found in the chloroplast thylakoid membrane. The catalysed reaction is a plastoquinone + NADH + (n+1) H(+)(in) = a plastoquinol + NAD(+) + n H(+)(out). It catalyses the reaction a plastoquinone + NADPH + (n+1) H(+)(in) = a plastoquinol + NADP(+) + n H(+)(out). In terms of biological role, NDH shuttles electrons from NAD(P)H:plastoquinone, via FMN and iron-sulfur (Fe-S) centers, to quinones in the photosynthetic chain and possibly in a chloroplast respiratory chain. The immediate electron acceptor for the enzyme in this species is believed to be plastoquinone. Couples the redox reaction to proton translocation, and thus conserves the redox energy in a proton gradient. The chain is NAD(P)H-quinone oxidoreductase subunit H, chloroplastic from Aethionema cordifolium (Lebanon stonecress).